We begin with the raw amino-acid sequence, 245 residues long: Extracellular protein ARB_04177 (245 aa).

It is found in the secreted. This chain is Extracellular protein ARB_04177, found in Arthroderma benhamiae (strain ATCC MYA-4681 / CBS 112371) (Trichophyton mentagrophytes).